The sequence spans 497 residues: ATP-dependent RNA helicase CshA (497 aa).

The Q motif signature appears at 1-29 (MKFSELGLSDSLLKAIKRSGYEEATPIQE). In terms of domain architecture, Helicase ATP-binding spans 32-202 (IPMVLEGKDV…VQFMSDPETV (171 aa)). Position 45 to 52 (45 to 52 (AQTGTGKT)) interacts with ATP. The DEAD box signature appears at 150–153 (DEAD). The region spanning 228-373 (DIMTRLIDVQ…PLKPPTAEEA (146 aa)) is the Helicase C-terminal domain. The tract at residues 425–497 (AASEVPVKIT…SFNIRHRKEN (73 aa)) is disordered. Residues 448–458 (RNGNRNNSHGG) are compositionally biased toward low complexity. 2 stretches are compositionally biased toward basic residues: residues 459–473 (NHYRRKNFRRHQHGS) and 481–497 (KSHSSRHSFNIRHRKEN).

It belongs to the DEAD box helicase family. CshA subfamily. In terms of assembly, oligomerizes, may be a member of the RNA degradosome.

It localises to the cytoplasm. The protein resides in the cell membrane. It catalyses the reaction ATP + H2O = ADP + phosphate + H(+). Functionally, DEAD-box RNA helicase possibly involved in RNA degradation. Unwinds dsRNA in both 5'- and 3'-directions, has RNA-dependent ATPase activity. Over-expression leads to cell aggregation. This chain is ATP-dependent RNA helicase CshA, found in Limosilactobacillus reuteri (Lactobacillus reuteri).